The primary structure comprises 152 residues: Transcriptional regulator MraZ (152 aa).

2 SpoVT-AbrB domains span residues 5 to 52 (ATTL…PLPE) and 81 to 124 (ADDC…NEDA).

The protein belongs to the MraZ family. Forms oligomers.

It is found in the cytoplasm. It localises to the nucleoid. This Idiomarina loihiensis (strain ATCC BAA-735 / DSM 15497 / L2-TR) protein is Transcriptional regulator MraZ.